A 279-amino-acid polypeptide reads, in one-letter code: Putative F-box protein At1g50880 (279 aa).

The region spanning 19–69 (SSSMSSIPLDVTSKILAKLPAKSVLRARCVSKQWSSISTDPYFISNMFPKQ) is the F-box domain.

The protein is Putative F-box protein At1g50880 of Arabidopsis thaliana (Mouse-ear cress).